We begin with the raw amino-acid sequence, 409 residues long: Probable beta-1,3-galactosyltransferase 3 (409 aa).

The helical; Signal-anchor for type II membrane protein transmembrane segment at 20-42 (WTFLLCFGSFCFGILFTDRMWII) threads the bilayer.

Belongs to the glycosyltransferase 31 family. Mn(2+) serves as cofactor.

Its subcellular location is the golgi apparatus membrane. The protein operates within protein modification; protein glycosylation. Beta-1,3-galactosyltransferase that transfers galactose from UDP-galactose to substrates with a terminal glycosyl residue. The protein is Probable beta-1,3-galactosyltransferase 3 (B3GALT3) of Arabidopsis thaliana (Mouse-ear cress).